A 156-amino-acid polypeptide reads, in one-letter code: uncharacterized protein (156 aa).

Residues 43 to 84 are a coiled coil; the sequence is LKIDENEVKLEISVEKLKNLSRVCENIEQVVDKVVEELRYAL.

This is an uncharacterized protein from Aquifex aeolicus (strain VF5).